The primary structure comprises 767 residues: General transcription and DNA repair factor IIH helicase/translocase subunit XPB1 (767 aa).

Positions 1–51 (MGNGERGRPNKKMKYGGKDDQKMKNIQNAEDYYDDADEDSRDGEGEEKKRD) are disordered. The span at 31-41 (DYYDDADEDSR) shows a compositional bias: acidic residues. Residues 42 to 51 (DGEGEEKKRD) are compositionally biased toward basic and acidic residues. Positions 293–455 (MFGNGRARSG…DLNFLIGPKL (163 aa)) constitute a Helicase ATP-binding domain. 306–313 (LPCGAGKS) serves as a coordination point for ATP. The DEVH box motif lies at 408-411 (DEVH). The Helicase C-terminal domain maps to 510–676 (RACEFLIRFH…SLPPPDAGSS (167 aa)). Residues 742 to 767 (RHKSGQQFKKPKDPTKRHNLFKKRYV) form a disordered region. A Nuclear localization signal motif is present at residues 750–766 (KKPKDPTKRHNLFKKRY). The span at 758 to 767 (RHNLFKKRYV) shows a compositional bias: basic residues.

Belongs to the helicase family. RAD25/XPB subfamily. Component of the 7-subunit TFIIH core complex composed of XPB, XPD, TFB1/GTF2H1, GTF2H2/P44, TFB4/GTF2H3, TFB2/GTF2H4 and TFB5/GTF2H5, which is active in NER. The core complex associates with the 3-subunit CDK-activating kinase (CAK) module composed of CYCH1/cyclin H1, CDKD and MAT1/At4g30820 to form the 10-subunit holoenzyme (holo-TFIIH) active in transcription. In terms of tissue distribution, expressed ubiquitously.

Its subcellular location is the nucleus. It carries out the reaction Couples ATP hydrolysis with the unwinding of duplex DNA by translocating in the 3'-5' direction.. It catalyses the reaction ATP + H2O = ADP + phosphate + H(+). ATP-dependent 3'-5' DNA helicase/translocase; binds dsDNA rather than ssDNA, unzipping it in a translocase rather than classical helicase activity. Component of the general transcription and DNA repair factor IIH (TFIIH) core complex. When complexed to CDK-activating kinase (CAK), involved in RNA transcription by RNA polymerase II. The ATPase activity of XPB/ERCC3, but not its helicase activity, is required for DNA opening; it may wrap around the damaged DNA wedging it open, causing localized melting and twisting that allows XPD/ERCC2 helicase to anchor. The ATP-dependent helicase activity of XPB/ERCC3 may be required for promoter escape. Also involved in transcription-coupled nucleotide excision repair (NER) of damaged DNA. In NER, TFIIH acts by opening DNA around the lesion to allow the excision of the damaged oligonucleotide and its replacement by a new DNA fragment. The structure of the TFIIH transcription complex differs from the NER-TFIIH complex. Partially complements UV sensitivity of a yeast SSL2 mutation. Required during the early stages of development, including seed germination. This chain is General transcription and DNA repair factor IIH helicase/translocase subunit XPB1 (XPB1), found in Arabidopsis thaliana (Mouse-ear cress).